Consider the following 313-residue polypeptide: Ribosomal RNA small subunit methyltransferase H (313 aa).

Residues 33–35 (AGH), Asp53, Phe82, Asp103, and Gln110 contribute to the S-adenosyl-L-methionine site.

The protein belongs to the methyltransferase superfamily. RsmH family.

It localises to the cytoplasm. The enzyme catalyses cytidine(1402) in 16S rRNA + S-adenosyl-L-methionine = N(4)-methylcytidine(1402) in 16S rRNA + S-adenosyl-L-homocysteine + H(+). Specifically methylates the N4 position of cytidine in position 1402 (C1402) of 16S rRNA. This chain is Ribosomal RNA small subunit methyltransferase H, found in Ruminiclostridium cellulolyticum (strain ATCC 35319 / DSM 5812 / JCM 6584 / H10) (Clostridium cellulolyticum).